The following is a 78-amino-acid chain: Acyl carrier protein (78 aa).

A Carrier domain is found at 2–77; that stretch reads STIEERVKKI…AAIDYVTSHQ (76 aa). S37 carries the O-(pantetheine 4'-phosphoryl)serine modification.

The protein belongs to the acyl carrier protein (ACP) family. In terms of processing, 4'-phosphopantetheine is transferred from CoA to a specific serine of apo-ACP by AcpS. This modification is essential for activity because fatty acids are bound in thioester linkage to the sulfhydryl of the prosthetic group.

It localises to the cytoplasm. It functions in the pathway lipid metabolism; fatty acid biosynthesis. Functionally, carrier of the growing fatty acid chain in fatty acid biosynthesis. This Pseudomonas fluorescens (strain SBW25) protein is Acyl carrier protein.